Reading from the N-terminus, the 623-residue chain is Kelch repeat and BTB domain-containing protein 2 (623 aa).

Residues 31–98 (TDIVLIVEGT…AYTGNLAMND (68 aa)) enclose the BTB domain. A BACK domain is found at 133–229 (CVRLLSFADL…IRIDALSEVT (97 aa)). Ser-300 is modified (phosphoserine). Kelch repeat units follow at residues 317–380 (DIYI…CCEG), 381–429 (HIYA…VVHD), 431–469 (IYVMTLNLMYCYFPRSDSWVEMAMRQTSRSFASAAAFGD), 470–529 (KIFY…RAVV), and 535–581 (CVFM…DFRC).

As to quaternary structure, component of the BCR(KBTBD2) E3 ubiquitin ligase complex, at least composed of CUL3, KBTBD2 and RBX1. Interacts (via the BTB domain) with CUL3.

It functions in the pathway protein modification; protein ubiquitination. In terms of biological role, substrate-specific adapter of a BCR (BTB-CUL3-RBX1) E3 ubiquitin ligase complex that acts as a regulator of the insulin signaling pathway, modulating insulin sensitivity by limiting PIK3R1/p85alpha abundance in adipocytes. Targets PIK3R1, the regulatory subunit of phosphatidylinositol 3-kinase (PI3K), for 'Lys-48'-linked polyubiquitination and proteasome-mediated degradation. This is Kelch repeat and BTB domain-containing protein 2 (KBTBD2) from Pongo abelii (Sumatran orangutan).